A 194-amino-acid chain; its full sequence is Small ribosomal subunit protein uS5 (194 aa).

The 64-residue stretch at Leu26 to Val89 folds into the S5 DRBM domain.

It belongs to the universal ribosomal protein uS5 family. As to quaternary structure, part of the 30S ribosomal subunit. Contacts proteins S4 and S8.

With S4 and S12 plays an important role in translational accuracy. In terms of biological role, located at the back of the 30S subunit body where it stabilizes the conformation of the head with respect to the body. The polypeptide is Small ribosomal subunit protein uS5 (Persephonella marina (strain DSM 14350 / EX-H1)).